The chain runs to 182 residues: MVKALLVGSKVLIPNVDESRYIYSNGFYGKAIGISKPKGPKDIIRPLELSLIESVYLAKKGLIKVIDKNGEVLEYEKLYEYSSKIINKFDIMYRVYEDLREKGFIVRSGVKYGADFAVYTLGPGLEHAPYVVIAVDIDEEITPHELLSFGRVSHSTRKRLVLALVDRKSESVRYIMFKWVKM.

Residues Tyr119, His127, and Lys158 contribute to the active site.

The protein belongs to the tRNA-intron endonuclease family. Archaeal short subfamily. As to quaternary structure, homotetramer; although the tetramer contains four active sites, only two participate in the cleavage. Therefore, it should be considered as a dimer of dimers.

The catalysed reaction is pretRNA = a 3'-half-tRNA molecule with a 5'-OH end + a 5'-half-tRNA molecule with a 2',3'-cyclic phosphate end + an intron with a 2',3'-cyclic phosphate and a 5'-hydroxyl terminus.. Functionally, endonuclease that removes tRNA introns. Cleaves pre-tRNA at the 5'- and 3'-splice sites to release the intron. The products are an intron and two tRNA half-molecules bearing 2',3' cyclic phosphate and 5'-OH termini. Recognizes a pseudosymmetric substrate in which 2 bulged loops of 3 bases are separated by a stem of 4 bp. This is tRNA-splicing endonuclease from Saccharolobus islandicus (strain M.16.27) (Sulfolobus islandicus).